A 199-amino-acid polypeptide reads, in one-letter code: Type-4 uracil-DNA glycosylase (199 aa).

[4Fe-4S] cluster-binding residues include Cys14 and Cys17. Residues Gly41–Ala43, Phe55, and Asn81 each bind uracil. The pseudo-FCL stretch occupies residues Val77 to Pro114. Residues Cys85 and Cys101 each contribute to the [4Fe-4S] cluster site. His163 lines the uracil pocket.

It belongs to the uracil-DNA glycosylase (UDG) superfamily. Type 4 (UDGa) family.

The enzyme catalyses Hydrolyzes single-stranded DNA or mismatched double-stranded DNA and polynucleotides, releasing free uracil.. With respect to regulation, product-inhibited by both uracil and apurinic/apyrimidinic sites. Removes uracil bases that are present in DNA as a result of either deamination of cytosine or misincorporation of dUMP instead of dTMP. Can remove uracil from double-stranded DNA containing either a U/G or U/A base pair as well as from single-stranded DNA. The polypeptide is Type-4 uracil-DNA glycosylase (Archaeoglobus fulgidus (strain ATCC 49558 / DSM 4304 / JCM 9628 / NBRC 100126 / VC-16)).